A 540-amino-acid polypeptide reads, in one-letter code: Chaperonin GroEL (540 aa).

Residues 29-32 (TLGP), 86-90 (DGTTT), G413, 476-478 (NAA), and D492 contribute to the ATP site.

This sequence belongs to the chaperonin (HSP60) family. As to quaternary structure, forms a cylinder of 14 subunits composed of two heptameric rings stacked back-to-back. Interacts with the co-chaperonin GroES.

It localises to the cytoplasm. The enzyme catalyses ATP + H2O + a folded polypeptide = ADP + phosphate + an unfolded polypeptide.. Together with its co-chaperonin GroES, plays an essential role in assisting protein folding. The GroEL-GroES system forms a nano-cage that allows encapsulation of the non-native substrate proteins and provides a physical environment optimized to promote and accelerate protein folding. The polypeptide is Chaperonin GroEL (Streptococcus constellatus).